A 128-amino-acid polypeptide reads, in one-letter code: Claw keratin (128 aa).

Tandem repeats lie at residues 83 to 91 and 92 to 100. The tract at residues 83–104 is 3 X 9 AA tandem repeats, Gly-rich; it reads GGYGGLGGYGGYGGLGGYGGYG. A 3; approximate repeat occupies 101–109; the sequence is GGYGGFGSC.

This sequence belongs to the avian keratin family. In terms of tissue distribution, abundantly expressed in the claw and at a low level in feather tissue.

This is Claw keratin (CKER1) from Gallus gallus (Chicken).